The chain runs to 212 residues: uncharacterized protein (212 aa).

The protein belongs to the methyltransferase superfamily.

This is an uncharacterized protein from Synechocystis sp. (strain ATCC 27184 / PCC 6803 / Kazusa).